Here is a 199-residue protein sequence, read N- to C-terminus: Twist-related protein 1 (199 aa).

Positions 1–18 are enriched in low complexity; the sequence is MMQDVSSSPVSPADDSLS. The segment at 1 to 102 is disordered; the sequence is MMQDVSSSPV…GGGSPQSYEE (102 aa). A compositionally biased stretch (basic residues) spans 34–43; it reads RGGRKRRSSR. Composition is skewed to gly residues over residues 46 to 65 and 80 to 96; these read AGGG…GGDE and GCGG…GGGS. Residues 105–156 enclose the bHLH domain; that stretch reads TQRVMANVRERQRTQSLNEAFAALRKIIPTLPSDKLSKIQTLKLAARYIDFL. Residues 158–188 form a sufficient for transactivation activity region; that stretch reads QVLQSDELDSKMASCSYVAHERLSYAFSVWR.

In terms of assembly, efficient DNA binding requires dimerization with another bHLH protein. Homodimer or heterodimer with E proteins such as TCF3. ID1 binds preferentially to TCF3 but does not interact efficiently with TWIST1 so ID1 levels control the amount of TCF3 available to dimerize with TWIST and thus determine the type of dimer formed.

The protein localises to the nucleus. Acts as a transcriptional regulator. Inhibits myogenesis by sequestrating E proteins, inhibiting trans-activation by MEF2, and inhibiting DNA-binding by MYOD1 through physical interaction. This interaction probably involves the basic domains of both proteins. Also represses expression of pro-inflammatory cytokines such as TNFA and IL1B. Regulates cranial suture patterning and fusion. Activates transcription as a heterodimer with E proteins. Regulates gene expression differentially, depending on dimer composition. Homodimers induce expression of FGFR2 and POSTN while heterodimers repress FGFR2 and POSTN expression and induce THBS1 expression. Heterodimerization is also required for osteoblast differentiation. Represses the activity of the circadian transcriptional activator: NPAS2-BMAL1 heterodimer. The protein is Twist-related protein 1 (TWIST1) of Microcebus murinus (Gray mouse lemur).